The primary structure comprises 652 residues: Gametogenetin (652 aa).

Disordered regions lie at residues 1–39, 52–237, 251–273, 291–473, and 488–576; these read MGNLQSEPSAGGGSRKVQPSDRAPDSRRTSLVEPEMTSQ, PGSA…DSES, PSLAPPAASSSLAAKASLGGGGG, QGPL…GHKE, and LAAD…GAAN. Basic and acidic residues-rich tracts occupy residues 18 to 30 and 124 to 133; these read QPSDRAPDSRRTS and RLLEASHRGQ. An interaction with GGNBP1 region spans residues 123 to 486; the sequence is RRLLEASHRG…APTAAPALPP (364 aa). Pro residues-rich tracts occupy residues 138–149 and 163–178; these read SLRPLKPPPPPR and QFPPPLETWKPPPPLP. A compositionally biased stretch (polar residues) spans 201-212; sequence ESQAGPRNQGQT. 3 stretches are compositionally biased toward low complexity: residues 213-230, 251-267, and 299-312; these read AGRARGGAPPHAGEGEMA, PSLAPPAASSSLAAKAS, and ARPLGEVSRGAQEA. S389 carries the post-translational modification Phosphoserine. Low complexity predominate over residues 407 to 422; sequence APALLAPPTFIFPAPT. Pro residues-rich tracts occupy residues 428–466 and 495–513; these read RPGPPGLQELPPLPPPTPPPTLQPPALQPTPLPVAPPLT and APSPAPAPTVAEPSPPVSA. The segment at 491–652 is interactions with ZNF403/GGNBP2 and OAZ3; sequence DQAPAPSPAP…HYDLQATHSN (162 aa). The span at 523–532 shows a compositional bias: basic residues; it reads TRTRRNKGSR. Residues 538–552 show a composition bias toward basic and acidic residues; that stretch reads TRKDGLHGDGPRERA.

Interacts with FANCL, GGNBP1 and ZNF403/GGNBP2.

May be involved in spermatogenesis. The chain is Gametogenetin (GGN) from Homo sapiens (Human).